A 362-amino-acid polypeptide reads, in one-letter code: RNA-binding protein 4 (362 aa).

2 consecutive RRM domains span residues 2–72 (VKLF…ASKN) and 78–148 (TKLH…LSTS). A Glycyl lysine isopeptide (Lys-Gly) (interchain with G-Cter in SUMO2) cross-link involves residue Lys-79. Residue Ser-86 is modified to Phosphoserine. A Glycyl lysine isopeptide (Lys-Gly) (interchain with G-Cter in SUMO2) cross-link involves residue Lys-92. The CCHC-type zinc finger occupies 160–177 (SGCYRCGKEGHWSKECPV). The tract at residues 196–362 (AVRTPYTMGY…YADRARYSAF (167 aa)) is interaction with TNPO3. Residues 306–336 (RSPLRRATGPVPTVGEGYGYGHESELSQGSS) are disordered. Ser-307 carries the post-translational modification Phosphoserine.

In terms of assembly, interacts with TNPO3; the interaction mediates nuclear import of the protein and is disrupted by nuclear Ran bound to GTP. Interacts with EIF4G1 and WT1. Interacts with EIF4A1; the interaction is modulated under stress-induced conditions. Interacts with AGO1. Interacts with AGO2; the interaction occurs under both cell proliferation and differentiation conditions and in an RNA- and phosphorylation-independent manner. Interacts with DDX5; the interaction occurs in an RNA-independent manner. Interacts with RBPMS; the interaction allows cooperative assembly of RNA-bound stable cell-specific alternative splicing regulatory complexes. Post-translationally, phosphorylated. Phosphorylated in vitro on Ser-307 by SRPK1. Phosphorylation on Ser-307 is induced upon cell stress signaling, which alters its subcellular localization and may modulate its activity on IRES-mediated mRNA translation. Phosphorylation on Ser-307 is induced upon cell muscle differentiation.

The protein resides in the nucleus. It is found in the nucleolus. Its subcellular location is the nucleus speckle. It localises to the cytoplasm. The protein localises to the cytoplasmic granule. In terms of biological role, RNA-binding factor involved in multiple aspects of cellular processes like alternative splicing of pre-mRNA and translation regulation. Modulates alternative 5'-splice site and exon selection. Acts as a muscle cell differentiation-promoting factor. Activates exon skipping of the PTB pre-mRNA during muscle cell differentiation. Antagonizes the activity of the splicing factor PTBP1 to modulate muscle cell-specific exon selection of alpha tropomyosin. Binds to intronic pyrimidine-rich sequence of the TPM1 and MAPT pre-mRNAs. Required for the translational activation of PER1 mRNA in response to circadian clock. Binds directly to the 3'-UTR of the PER1 mRNA. Exerts a suppressive activity on Cap-dependent translation via binding to CU-rich responsive elements within the 3'UTR of mRNAs, a process increased under stress conditions or during myocytes differentiation. Recruits EIF4A1 to stimulate IRES-dependent translation initiation in respons to cellular stress. Associates to internal ribosome entry segment (IRES) in target mRNA species under stress conditions. Plays a role for miRNA-guided RNA cleavage and translation suppression by promoting association of AGO2-containing miRNPs with their cognate target mRNAs. Associates with miRNAs during muscle cell differentiation. Binds preferentially to 5'-CGCGCG[GCA]-3' motif in vitro. This chain is RNA-binding protein 4 (RBM4), found in Bos taurus (Bovine).